Consider the following 227-residue polypeptide: PKHD-type hydroxylase GOX0559 (227 aa).

One can recognise a Fe2OG dioxygenase domain in the interval Arg78–Ser178. Residues His96, Asp98, and His159 each coordinate Fe cation. Residue Arg169 coordinates 2-oxoglutarate.

The cofactor is Fe(2+). It depends on L-ascorbate as a cofactor.

This chain is PKHD-type hydroxylase GOX0559, found in Gluconobacter oxydans (strain 621H) (Gluconobacter suboxydans).